A 313-amino-acid polypeptide reads, in one-letter code: Protein FixB (313 aa).

An FAD-binding site is contributed by 255–283; that stretch reads LYLAVGISGQIQHMVGANASQTIFAINKD.

It belongs to the ETF alpha-subunit/FixB family. As to quaternary structure, heterodimer of FixA and FixB.

Its pathway is amine and polyamine metabolism; carnitine metabolism. In terms of biological role, required for anaerobic carnitine reduction. May bring reductant to CaiA. In Escherichia coli O17:K52:H18 (strain UMN026 / ExPEC), this protein is Protein FixB.